The chain runs to 122 residues: Large ribosomal subunit protein uL14 (122 aa).

It belongs to the universal ribosomal protein uL14 family. In terms of assembly, part of the 50S ribosomal subunit. Forms a cluster with proteins L3 and L19. In the 70S ribosome, L14 and L19 interact and together make contacts with the 16S rRNA in bridges B5 and B8.

Functionally, binds to 23S rRNA. Forms part of two intersubunit bridges in the 70S ribosome. The protein is Large ribosomal subunit protein uL14 of Rippkaea orientalis (strain PCC 8801 / RF-1) (Cyanothece sp. (strain PCC 8801)).